The following is a 562-amino-acid chain: MSFMNPVDMVDEDAADLQFPKVALLHIFTTLNCLFAVEPLGPQVKRFIHAHQNEHTRNSMVLYNPHTLHRYLEEMEEKTRDQNSSVPSATKDANRCATCRCSLTEPYIKCSECLDTLLCLQCFSRGKEAFSHRNNHAYIIVRDNIQVFADEPHWTARDERILLKTLRTHGYGNWEAVSQALDQRHEPAEVRRHYHDCYFGGIFERLLNLKHARDSYVPERMPYVFKMRSLDPPRHDDIASMQFRLSAGYRCARGDFDTPYDTSAESLLSIMVDHRGRDDDNEASESEFEREVTEELQLGLVRAYNNRLRERQRRYKIMRQHGLIMPNRTVSWISKYVHAFGSDASCMRFLGFMQICPDPIKFDMLLESLRYYRELHSQLHKLYDLREHGVRTLSGAKLYARLSKERQQAQRDYSRLKQTDAFDWQQLVQHYESNRSGDPGPLAINSKLYVMNTRRKASPIEIGGGKHFTHCLTPTEYNFSLIPDLPGYSKLDDGERKLCSVARLVPQSYLDYKNQLVTEQAKLGYLRLADARRLIKIDVNKTRQIYDFLLEHGHISRPPSYG.

Residues 91 to 146 form a ZZ-type zinc finger; it reads KDANRCATCRCSLTEPYIKCSECLDTLLCLQCFSRGKEAFSHRNNHAYIIVRDNIQ. Zn(2+)-binding residues include cysteine 96, cysteine 99, cysteine 110, cysteine 113, cysteine 119, cysteine 122, histidine 132, and histidine 136. The SANT domain maps to 154–198; that stretch reads WTARDERILLKTLRTHGYGNWEAVSQALDQRHEPAEVRRHYHDCY. Positions 471–562 constitute an SWIRM domain; that stretch reads CLTPTEYNFS…GHISRPPSYG (92 aa).

In terms of assembly, component of the Ada2a-containing (ATAC) complex composed of at least Ada2a, Atac1, Hcf, Ada3, Gcn5, Mocs2B, Charac-14, Atac3, Atac2, NC2beta and wds. Component of a complex that does not include Gcn5 or Ada3.

It is found in the nucleus. It localises to the chromosome. Functionally, component of the histone acetyltransferase (HAT) complex ATAC; predominantly involved in acetylation of histone H4, including at Lys-6 (H4K5ac) and Lys-13 (H4K12ac). May be part of several different complexes, including Gcn5-independent complexes involved in RNA polymerase II-dependent transcription. The polypeptide is Transcriptional adapter 2A (Drosophila melanogaster (Fruit fly)).